Consider the following 206-residue polypeptide: Photosynthetic reaction center cytochrome c-551 (206 aa).

Helical transmembrane passes span 10-30, 49-69, and 76-96; these read IALAIGGAVLMGTLFFLVSFL, FMGWFLLIFCASLIIMGLGKM, and KWFLSFPLSIFVIVMVMFFSL. Cys-152, Cys-155, His-156, and Met-182 together coordinate heme.

In terms of assembly, component of the photosynthetic reaction center. The reaction center interacts with the Fenna-Matthews-Olson (FMO, fmoA) complex. In terms of processing, binds 1 heme group per subunit.

It is found in the cell inner membrane. In terms of biological role, monoheme cytochrome which is the immediate electron donor to P840 of the photosynthetic reaction center complex. The polypeptide is Photosynthetic reaction center cytochrome c-551 (pscC) (Chlorobaculum parvum (strain DSM 263 / NCIMB 8327) (Chlorobium vibrioforme subsp. thiosulfatophilum)).